An 892-amino-acid chain; its full sequence is DNA mismatch repair protein MutS (892 aa).

ATP is bound at residue 607 to 614; sequence GPNMSGKS. The segment at 826 to 854 is disordered; the sequence is ETKAETEEESQLSFFGGEQSSKKQDKPVL. The span at 845–854 shows a compositional bias: basic and acidic residues; sequence SSKKQDKPVL.

Belongs to the DNA mismatch repair MutS family.

Functionally, this protein is involved in the repair of mismatches in DNA. It is possible that it carries out the mismatch recognition step. This protein has a weak ATPase activity. The polypeptide is DNA mismatch repair protein MutS (Bacillus cereus (strain AH187)).